A 49-amino-acid chain; its full sequence is Large ribosomal subunit protein bL33A (49 aa).

The protein belongs to the bacterial ribosomal protein bL33 family.

In Lactobacillus johnsonii (strain CNCM I-12250 / La1 / NCC 533), this protein is Large ribosomal subunit protein bL33A.